Here is a 405-residue protein sequence, read N- to C-terminus: Elongation factor Tu (405 aa).

The region spanning 10–215 is the tr-type G domain; sequence KPHVNVGTIG…AVDSYIPTPE (206 aa). The tract at residues 19-26 is G1; it reads GHVDHGKT. 19 to 26 serves as a coordination point for GTP; it reads GHVDHGKT. Position 26 (T26) interacts with Mg(2+). Residues 61–65 are G2; it reads GITIN. A G3 region spans residues 82–85; the sequence is DCPG. Residues 82–86 and 137–140 each bind GTP; these read DCPGH and NKVD. The tract at residues 137 to 140 is G4; sequence NKVD. The interval 175–177 is G5; it reads SAL.

It belongs to the TRAFAC class translation factor GTPase superfamily. Classic translation factor GTPase family. EF-Tu/EF-1A subfamily. Monomer.

It localises to the cytoplasm. The enzyme catalyses GTP + H2O = GDP + phosphate + H(+). Functionally, GTP hydrolase that promotes the GTP-dependent binding of aminoacyl-tRNA to the A-site of ribosomes during protein biosynthesis. This is Elongation factor Tu from Deinonema sp.